Consider the following 339-residue polypeptide: 4-hydroxy-2-oxovalerate aldolase (339 aa).

Residues 8 to 260 (IILHDMCLRD…STDVDVFKLM (253 aa)) enclose the Pyruvate carboxyltransferase domain. 16-17 (RD) serves as a coordination point for substrate. Aspartate 17 contacts Mn(2+). Residue histidine 20 is the Proton acceptor of the active site. Residues serine 170 and histidine 199 each contribute to the substrate site. Positions 199 and 201 each coordinate Mn(2+). Tyrosine 290 provides a ligand contact to substrate.

The protein belongs to the 4-hydroxy-2-oxovalerate aldolase family.

It catalyses the reaction (S)-4-hydroxy-2-oxopentanoate = acetaldehyde + pyruvate. In Shewanella woodyi (strain ATCC 51908 / MS32), this protein is 4-hydroxy-2-oxovalerate aldolase.